The primary structure comprises 224 residues: Glutamate/aspartate import permease protein GltK (224 aa).

The Periplasmic segment spans residues 1–19 (MYEFDWSSIVPSLPYLLDG). A helical transmembrane segment spans residues 20 to 40 (LVITLKITVTAVVIGILWGTM). Residues 20–216 (LVITLKITVT…VISLSASLLV (197 aa)) enclose the ABC transmembrane type-1 domain. Topologically, residues 41–67 (LAVMRLSSFAPVAWFAKAYVNVFRSIP) are cytoplasmic. The chain crosses the membrane as a helical span at residues 68-88 (LVMVLLWFYLIVPGFLQNVLG). At 89-94 (LSPKND) the chain is on the periplasmic side. Residues 95–112 (IRLISAMVAFSMFEAAYY) traverse the membrane as a helical segment. The Cytoplasmic segment spans residues 113 to 154 (SEIIRAGIQSISRGQSSAALALGMTHWQSMKLIILPQAFRAM). The chain crosses the membrane as a helical span at residues 155–175 (VPLLLTQGIVLFQDTSLVYVL). Residues 176 to 196 (SLADFFRTASTIGERDGTQVE) lie on the Periplasmic side of the membrane. A helical membrane pass occupies residues 197 to 217 (MILFAGFVYFVISLSASLLVS). Residues 218-224 (YLKRRTA) lie on the Cytoplasmic side of the membrane.

It belongs to the binding-protein-dependent transport system permease family. HisMQ subfamily. The complex is composed of two ATP-binding proteins (GltL), two transmembrane proteins (GltJ and GltK) and a solute-binding protein (GltI).

The protein localises to the cell inner membrane. Functionally, part of the ABC transporter complex GltIJKL involved in glutamate and aspartate uptake. Probably responsible for the translocation of the substrate across the membrane. The chain is Glutamate/aspartate import permease protein GltK (gltK) from Escherichia coli O157:H7.